Consider the following 249-residue polypeptide: Tumor necrosis factor ligand superfamily member 12 (249 aa).

Residues 1–21 (MAARRSQRRRGRRGEPGTALL) are Cytoplasmic-facing. The helical; Signal-anchor for type II membrane protein transmembrane segment at 22–45 (APLVLSLGLALACLGLLLVVVSLG) threads the bilayer. At 46–249 (SWATLSAQEP…LTYFGLFQVH (204 aa)) the chain is on the extracellular side. Residues 52-78 (AQEPSQEELTAEDRREPPELNPQTEES) are disordered. The THD domain occupies 107-248 (IAAHYEVHPR…FLTYFGLFQV (142 aa)). Residue Asn139 is glycosylated (N-linked (GlcNAc...) asparagine). A disulfide bridge links Cys191 with Cys210.

It belongs to the tumor necrosis factor family. In terms of assembly, homotrimer. Interacts with the angiogenic factor AGGF1/VG5Q. In terms of processing, the soluble form is produced from the membrane form by proteolytic processing. As to expression, widely expressed.

It is found in the cell membrane. Its subcellular location is the secreted. In terms of biological role, binds to FN14 and possibly also to TNRFSF12/APO3. Weak inducer of apoptosis in some cell types. Mediates NF-kappa-B activation. Promotes angiogenesis and the proliferation of endothelial cells. Also involved in induction of inflammatory cytokines. Promotes IL8 secretion. The polypeptide is Tumor necrosis factor ligand superfamily member 12 (Tnfsf12) (Mus musculus (Mouse)).